We begin with the raw amino-acid sequence, 1655 residues long: Outer membrane protein B (1655 aa).

Residues 1335-1362 constitute a propeptide that is removed on maturation; sequence GALRYLGTPETAEMAGPEAGAIPAAVAA. In terms of domain architecture, Autotransporter spans 1367–1655; it reads VDNVAYGIWA…QGTLKVRVNF (289 aa).

Belongs to the rickettsiae OmpA/OmpB family.

The protein resides in the periplasm. It localises to the secreted. It is found in the cell surface. Its subcellular location is the cell outer membrane. Its function is as follows. The 120 kDa surface-exposed protein is a major structural protein which may play a role as a rickettsial virulence factor and/or immunogen during infection. The 32 kDa beta peptide may serve as a membrane anchor. It has been shown to adhere to biotinylated Vero cell proteins. The polypeptide is Outer membrane protein B (ompB) (Rickettsia conorii (strain ATCC VR-613 / Malish 7)).